The following is a 108-amino-acid chain: Small ribosomal subunit protein eS25 (108 aa).

Residues 1–36 form a disordered region; it reads MAPKKAQAPPPSSKPAKSGGGKQKKKKWSKGKQKEK. Over residues 22–31 the composition is skewed to basic residues; that stretch reads KQKKKKWSKG.

This sequence belongs to the eukaryotic ribosomal protein eS25 family.

The protein is Small ribosomal subunit protein eS25 (RPS25) of Solanum lycopersicum (Tomato).